A 157-amino-acid polypeptide reads, in one-letter code: Protein Smg (157 aa).

It belongs to the Smg family.

The chain is Protein Smg from Shigella boydii serotype 18 (strain CDC 3083-94 / BS512).